The chain runs to 360 residues: Phospho-N-acetylmuramoyl-pentapeptide-transferase (360 aa).

The next 10 helical transmembrane spans lie at R24–I44, G69–W89, W92–F112, M133–N153, I158–V178, G199–S219, V239–Y259, V263–I283, F288–V308, and Q337–L357.

It belongs to the glycosyltransferase 4 family. MraY subfamily. The cofactor is Mg(2+).

The protein localises to the cell inner membrane. The enzyme catalyses UDP-N-acetyl-alpha-D-muramoyl-L-alanyl-gamma-D-glutamyl-meso-2,6-diaminopimeloyl-D-alanyl-D-alanine + di-trans,octa-cis-undecaprenyl phosphate = di-trans,octa-cis-undecaprenyl diphospho-N-acetyl-alpha-D-muramoyl-L-alanyl-D-glutamyl-meso-2,6-diaminopimeloyl-D-alanyl-D-alanine + UMP. The protein operates within cell wall biogenesis; peptidoglycan biosynthesis. Its function is as follows. Catalyzes the initial step of the lipid cycle reactions in the biosynthesis of the cell wall peptidoglycan: transfers peptidoglycan precursor phospho-MurNAc-pentapeptide from UDP-MurNAc-pentapeptide onto the lipid carrier undecaprenyl phosphate, yielding undecaprenyl-pyrophosphoryl-MurNAc-pentapeptide, known as lipid I. This is Phospho-N-acetylmuramoyl-pentapeptide-transferase from Neisseria gonorrhoeae (strain ATCC 700825 / FA 1090).